A 317-amino-acid chain; its full sequence is Methionyl-tRNA formyltransferase (317 aa).

Position 113-116 (Ser113–Pro116) interacts with (6S)-5,6,7,8-tetrahydrofolate.

Belongs to the Fmt family.

It catalyses the reaction L-methionyl-tRNA(fMet) + (6R)-10-formyltetrahydrofolate = N-formyl-L-methionyl-tRNA(fMet) + (6S)-5,6,7,8-tetrahydrofolate + H(+). Functionally, attaches a formyl group to the free amino group of methionyl-tRNA(fMet). The formyl group appears to play a dual role in the initiator identity of N-formylmethionyl-tRNA by promoting its recognition by IF2 and preventing the misappropriation of this tRNA by the elongation apparatus. This is Methionyl-tRNA formyltransferase from Pseudomonas fluorescens (strain SBW25).